The sequence spans 313 residues: Calcium homeostasis modulator protein 6 (313 aa).

The Cytoplasmic segment spans residues Met1–Ser21. The helical transmembrane segment at Leu22–Val37 threads the bilayer. At Val38–Thr46 the chain is on the extracellular side. Disulfide bonds link Cys41–Cys125, Cys43–Cys154, and Cys138–Cys145. The helical transmembrane segment at Trp47–Tyr68 threads the bilayer. Residues Ala69–Leu101 are Cytoplasmic-facing. A helical membrane pass occupies residues Ser102–Ala126. Over Val127 to Gln167 the chain is Extracellular. Residues Leu168–Val190 form a helical membrane-spanning segment. Over Lys191–Leu313 the chain is Cytoplasmic.

The protein belongs to the CALHM family. In terms of assembly, oligomerizes to form decameric and undecameric channels. In terms of processing, N-glycosylated. In terms of tissue distribution, immune cells in primary and secondary lymphoid organs.

Its subcellular location is the cell membrane. It carries out the reaction ATP(in) = ATP(out). Its activity is regulated as follows. Inhibited by Gd(3+). Partially inhibited by divalent ions Ca(2+) and Ba(2+). Its function is as follows. Pore-forming subunit of an ATP-permeable channel. In response to pathogen-derived and proinflammatory stimuli, relocates from intracellular compartments to NK-dendritic cell and NK-macrophage immune synapses where it mediates ATP efflux and NK cell activation involved in antimicrobial and antitumor responses. May assemble to form gap junction channel-like structures with gating and ion conductance likely regulated by membrane lipids and voltage rather than by extracellular calcium levels. This Mus musculus (Mouse) protein is Calcium homeostasis modulator protein 6.